A 3470-amino-acid polypeptide reads, in one-letter code: Dynein axonemal heavy chain 5 (3470 aa).

The interval 1–1938 (MFRIGRRQLW…MIHITDVAFT (1938 aa)) is stem. A disordered region spans residues 899-918 (EKVRHENASPNGDTSGGGEG). 4 AAA regions span residues 1939–2161 (YQNE…VLRT), 2221–2440 (TAIS…IQNL), 2547–2800 (VYPP…IWQG), and 2913–3167 (LYNE…FRRS). Residues 1977 to 1984 (GPAGTGKT) and 2259 to 2266 (GPSGSGKT) each bind ATP. Coiled-coil stretches lie at residues 3207-3241 (LKEA…VLKE) and 3434-3468 (HALA…AMTE).

Belongs to the dynein heavy chain family. As to quaternary structure, interacts with DNAL1. Consists of at least two heavy chains and a number of intermediate and light chains.

Its subcellular location is the cytoplasm. The protein resides in the cytoskeleton. It localises to the cilium axoneme. In terms of biological role, force generating protein of respiratory cilia. Produces force towards the minus ends of microtubules. Dynein has ATPase activity; the force-producing power stroke is thought to occur on release of ADP. Required for structural and functional integrity of the cilia of ependymal cells lining the brain ventricles. The polypeptide is Dynein axonemal heavy chain 5 (Rattus norvegicus (Rat)).